A 163-amino-acid chain; its full sequence is UPF0523 protein B (163 aa).

This sequence belongs to the UPF0523 family.

The protein is UPF0523 protein B of Dictyostelium discoideum (Social amoeba).